A 411-amino-acid chain; its full sequence is Phosphopentomutase (411 aa).

Mn(2+) contacts are provided by Asp-14, Asp-306, His-311, Asp-347, His-348, and His-359.

This sequence belongs to the phosphopentomutase family. Mn(2+) serves as cofactor.

It localises to the cytoplasm. The catalysed reaction is 2-deoxy-alpha-D-ribose 1-phosphate = 2-deoxy-D-ribose 5-phosphate. The enzyme catalyses alpha-D-ribose 1-phosphate = D-ribose 5-phosphate. Its pathway is carbohydrate degradation; 2-deoxy-D-ribose 1-phosphate degradation; D-glyceraldehyde 3-phosphate and acetaldehyde from 2-deoxy-alpha-D-ribose 1-phosphate: step 1/2. Its function is as follows. Isomerase that catalyzes the conversion of deoxy-ribose 1-phosphate (dRib-1-P) and ribose 1-phosphate (Rib-1-P) to deoxy-ribose 5-phosphate (dRib-5-P) and ribose 5-phosphate (Rib-5-P), respectively. The sequence is that of Phosphopentomutase from Lactococcus lactis subsp. lactis (strain IL1403) (Streptococcus lactis).